We begin with the raw amino-acid sequence, 39 residues long: Gonadal protein gdl-ORF39 (39 aa).

In terms of tissue distribution, in bundles of maturing sperm of larval, pupal and adult males.

The chain is Gonadal protein gdl-ORF39 (gdl-ORF39) from Drosophila melanogaster (Fruit fly).